The primary structure comprises 340 residues: MALSVYYDKDCNLDLIRSKKVAVVGFGSQGHAHAENLRDSGVEVVIGLHKGGSSWSKAEAKNFKVMEVAEASRYADVIMILIPDELQAEVFERDILPNLSEGKAIAFGHGFNVHFGQIKAPKGVDVIMIAPKAPGHTVRSEFVKGGGIPDLIAVEQNASGIAKEICLSYASAIGGGRTGIIETTFKDETETDLFGEQAVLCGGVTALVKAGFETLVEAGYPEEMAYFECLHELKLIVDLIFQGGLSDMRYSVSNTAEYGDMVSGPRVVNETSKAAMKEILKDIQEGRFAKDFILERKAGYARMNAERKNLAAHPIEQTGERLRAMMPWIGANKIIDKNRN.

The KARI N-terminal Rossmann domain occupies 3–183; sequence LSVYYDKDCN…GGGRTGIIET (181 aa). Residues 26–29, serine 54, and 84–87 each bind NADP(+); these read FGSQ and DELQ. Histidine 109 is a catalytic residue. An NADP(+)-binding site is contributed by glycine 135. The KARI C-terminal knotted domain maps to 184–329; the sequence is TFKDETETDL…ERLRAMMPWI (146 aa). 4 residues coordinate Mg(2+): aspartate 192, glutamate 196, glutamate 228, and glutamate 232. Residue serine 253 coordinates substrate.

Belongs to the ketol-acid reductoisomerase family. The cofactor is Mg(2+).

It catalyses the reaction (2R)-2,3-dihydroxy-3-methylbutanoate + NADP(+) = (2S)-2-acetolactate + NADPH + H(+). The enzyme catalyses (2R,3R)-2,3-dihydroxy-3-methylpentanoate + NADP(+) = (S)-2-ethyl-2-hydroxy-3-oxobutanoate + NADPH + H(+). It participates in amino-acid biosynthesis; L-isoleucine biosynthesis; L-isoleucine from 2-oxobutanoate: step 2/4. It functions in the pathway amino-acid biosynthesis; L-valine biosynthesis; L-valine from pyruvate: step 2/4. Its function is as follows. Involved in the biosynthesis of branched-chain amino acids (BCAA). Catalyzes an alkyl-migration followed by a ketol-acid reduction of (S)-2-acetolactate (S2AL) to yield (R)-2,3-dihydroxy-isovalerate. In the isomerase reaction, S2AL is rearranged via a Mg-dependent methyl migration to produce 3-hydroxy-3-methyl-2-ketobutyrate (HMKB). In the reductase reaction, this 2-ketoacid undergoes a metal-dependent reduction by NADPH to yield (R)-2,3-dihydroxy-isovalerate. This chain is Ketol-acid reductoisomerase (NADP(+)), found in Wolinella succinogenes (strain ATCC 29543 / DSM 1740 / CCUG 13145 / JCM 31913 / LMG 7466 / NCTC 11488 / FDC 602W) (Vibrio succinogenes).